A 741-amino-acid polypeptide reads, in one-letter code: Photosystem I P700 chlorophyll a apoprotein A2 1 (741 aa).

Helical transmembrane passes span 46-69, 135-158, 175-199, 273-291, 334-357, 373-399, 421-443, and 524-542; these read IFATHFGHLAIIFLWASSLLFHVA, LYTGSVFLLLFASLFLFAGWLHLQ, LNHHLAGLFGVSSLAWAGHLIHVAI, IAHHHLAIAVLFIVAGHMY, LHFQLGWHLACLGVVTSWVAQHMY, AALYTHHQYIAIFLMVGAFAHGAIFLV, AIISHLSWVSLFLGFHTLGLYVH, and FLVHHAIALGLHTTTLILV. Residues Cys-566 and Cys-575 each contribute to the [4Fe-4S] cluster site. The next 2 helical transmembrane spans lie at 582-603 and 650-672; these read SFYLSLFWALNTVGWVTFYWHW and LSVWAWMFLFGHLVWATGFMFLI. Chlorophyll a is bound by residues His-661, Met-669, and Tyr-677. Trp-678 contributes to the phylloquinone binding site. The chain crosses the membrane as a helical span at residues 714–734; that stretch reads VVGLAHFTVGYVLTYAAFLIA.

This sequence belongs to the PsaA/PsaB family. As to quaternary structure, the PsaA/B heterodimer binds the P700 chlorophyll special pair and subsequent electron acceptors. PSI consists of a core antenna complex that captures photons, and an electron transfer chain that converts photonic excitation into a charge separation. The cyanobacterial PSI reaction center is composed of one copy each of PsaA,B,C,D,E,F,I,J,K,L,M and X, and forms trimeric complexes. The cofactor is PSI electron transfer chain: 5 chlorophyll a, 1 chlorophyll a', 2 phylloquinones and 3 4Fe-4S clusters. PSI core antenna: 90 chlorophyll a, 22 carotenoids, 3 phospholipids and 1 galactolipid. P700 is a chlorophyll a/chlorophyll a' dimer, A0 is one or more chlorophyll a, A1 is one or both phylloquinones and FX is a shared 4Fe-4S iron-sulfur center..

Its subcellular location is the cellular thylakoid membrane. It catalyses the reaction reduced [plastocyanin] + hnu + oxidized [2Fe-2S]-[ferredoxin] = oxidized [plastocyanin] + reduced [2Fe-2S]-[ferredoxin]. Its function is as follows. PsaA and PsaB bind P700, the primary electron donor of photosystem I (PSI), as well as the electron acceptors A0, A1 and FX. PSI is a plastocyanin/cytochrome c6-ferredoxin oxidoreductase, converting photonic excitation into a charge separation, which transfers an electron from the donor P700 chlorophyll pair to the spectroscopically characterized acceptors A0, A1, FX, FA and FB in turn. Oxidized P700 is reduced on the lumenal side of the thylakoid membrane by plastocyanin or cytochrome c6. This chain is Photosystem I P700 chlorophyll a apoprotein A2 1, found in Trichormus variabilis (strain ATCC 29413 / PCC 7937) (Anabaena variabilis).